Here is a 907-residue protein sequence, read N- to C-terminus: Envelope glycoprotein B (907 aa).

The first 22 residues, 1–22 (MESRIWCLVVCVNLCIVCLGAA), serve as a signal peptide directing secretion. Over 23–751 (VSSSSTRGTS…EGVATFLKNP (729 aa)) the chain is Virion surface. Residues 29 to 62 (RGTSATHSHHSSHTTSAAHSRSGSVSQRVTSSQT) are disordered. Residues 41–62 (HTTSAAHSRSGSVSQRVTSSQT) are compositionally biased toward low complexity. Asparagine 68, asparagine 73, and asparagine 85 each carry an N-linked (GlcNAc...) asparagine; by host glycan. Cystine bridges form between cysteine 94–cysteine 551, cysteine 111–cysteine 507, cysteine 185–cysteine 250, and cysteine 344–cysteine 391. The tract at residues 152–158 (SYAYIHT) is involved in fusion and/or binding to host membrane. Asparagine 208 carries N-linked (GlcNAc...) asparagine; by host glycosylation. Residues 237 to 244 (GSTWLYRE) form an involved in fusion and/or binding to host membrane region. N-linked (GlcNAc...) asparagine; by host glycans are attached at residues asparagine 281, asparagine 286, asparagine 302, asparagine 341, asparagine 383, asparagine 405, asparagine 409, asparagine 417, asparagine 447, asparagine 452, asparagine 456, asparagine 466, asparagine 555, and asparagine 586. An intrachain disulfide couples cysteine 574 to cysteine 611. Hydrophobic membrane proximal region stretches follow at residues 697–749 (VEDK…TFLK) and 708–748 (YLKG…ATFL). A helical transmembrane segment spans residues 752–772 (FGAFTIILVAIAVVIIIYLIY). Residues 773-907 (TRQRRLCMQP…LKDSDEEENV (135 aa)) lie on the Intravirion side of the membrane. 2 stretches are compositionally biased toward polar residues: residues 798-810 (VTSG…SLQA) and 860-877 (RAQQ…GTQD). 2 disordered regions span residues 798–838 (VTSG…TAAP) and 860–907 (RAQQ…EENV). Basic and acidic residues predominate over residues 878 to 887 (KGQKPNLLDR). The short motif at 895–898 (YRHL) is the Internalization motif element.

The protein belongs to the herpesviridae glycoprotein B family. Homotrimer; disulfide-linked. Binds to heparan sulfate proteoglycans. Interacts with gH/gL heterodimer. Interacts with host C-type lectin CD209/DC-SIGN. Interacts with host ITGB1, EGFR, and PDGFRA. Post-translationally, a proteolytic cleavage by host furin generates two subunits that remain linked by disulfide bonds.

It is found in the virion membrane. The protein localises to the host cell membrane. The protein resides in the host endosome membrane. Its subcellular location is the host Golgi apparatus membrane. In terms of biological role, envelope glycoprotein that plays a role in host cell entry, cell to-cell virus transmission, and fusion of infected cells. May be involved in the initial attachment via binding to heparan sulfate together with the gM/gN complex that binds heparin with higher affinity. Interacts with host integrin ITGB1, PDGFRA and EGFR that likely serve as postattachment entry receptors. Also participates in the fusion of viral and cellular membranes leading to virus entry into the host cell. Membrane fusion is mediated by the fusion machinery composed at least of gB and the heterodimer gH/gL. The chain is Envelope glycoprotein B from Homo sapiens (Human).